A 356-amino-acid chain; its full sequence is Glutamine synthetase (356 aa).

The GS beta-grasp domain maps to 19-99 (VIAEYIWIGG…VICDTYTPAG (81 aa)). The GS catalytic domain occupies 106-356 (KRHGAAKIFS…IAETTLLWKP (251 aa)).

Belongs to the glutamine synthetase family. Homooctamer. In terms of tissue distribution, found at highest levels in root nodules.

It localises to the cytoplasm. It catalyses the reaction L-glutamate + NH4(+) + ATP = L-glutamine + ADP + phosphate + H(+). In Alnus glutinosa (European alder), this protein is Glutamine synthetase (GLN1).